The primary structure comprises 446 residues: UDP-N-acetylmuramoylalanine--D-glutamate ligase (446 aa).

ATP is bound at residue 115–121; the sequence is GSNGKST.

This sequence belongs to the MurCDEF family.

It is found in the cytoplasm. The enzyme catalyses UDP-N-acetyl-alpha-D-muramoyl-L-alanine + D-glutamate + ATP = UDP-N-acetyl-alpha-D-muramoyl-L-alanyl-D-glutamate + ADP + phosphate + H(+). The protein operates within cell wall biogenesis; peptidoglycan biosynthesis. Its function is as follows. Cell wall formation. Catalyzes the addition of glutamate to the nucleotide precursor UDP-N-acetylmuramoyl-L-alanine (UMA). The protein is UDP-N-acetylmuramoylalanine--D-glutamate ligase of Hahella chejuensis (strain KCTC 2396).